Consider the following 121-residue polypeptide: Small ribosomal subunit protein uS13 (121 aa).

The segment at 91-121 (HRMSLPVRGQRTRTNARTRRGSRKTVAGRKK) is disordered. Residues 100 to 121 (QRTRTNARTRRGSRKTVAGRKK) are compositionally biased toward basic residues.

The protein belongs to the universal ribosomal protein uS13 family. In terms of assembly, part of the 30S ribosomal subunit. Forms a loose heterodimer with protein S19. Forms two bridges to the 50S subunit in the 70S ribosome.

Its function is as follows. Located at the top of the head of the 30S subunit, it contacts several helices of the 16S rRNA. In the 70S ribosome it contacts the 23S rRNA (bridge B1a) and protein L5 of the 50S subunit (bridge B1b), connecting the 2 subunits; these bridges are implicated in subunit movement. Contacts the tRNAs in the A and P-sites. The polypeptide is Small ribosomal subunit protein uS13 (Prochlorococcus marinus (strain SARG / CCMP1375 / SS120)).